The primary structure comprises 523 residues: MSGNTTNVHETRAKFAETLQPRIGGNTTKVIRAALEKNEAESGVSEDNDNGSLEKVNVATSPLLTSTPPTISKALVKLYPYLILIDEFLNVVTWTGKNIWSSVLMLCLFITTVEYFETLVKYFGHLAIIAILWGYSLLDNYIEGTLSSSPTLEDIALLMNRVSLKSDILLSPMVNLGTQDIQRLLYTTVILSPIYVMITWLLLPPRSLMLMVGMFLLTYHSPWSKVARRLLWKFKIVRLLVFYVTGLDLGGINKDQGIFATVQKQVKKLASTENSNGVLSDSKPIRFTYVLYENQRRWLGIGWKPSMLSYERTPWTDEFLNEAPSPENFHLPEETNTMVWRWVDKTWRLDMTNDGAIQVPNSKARTSADPSPDEGFIYYDNTWKKPSKEDSFSKYTRRRRWVRTAELVKTSDFDESVINSNRNSAIEQKVEENSTNGLTAEQELGSNKQEKDNAKKVGEPTTEETKEFAEASNINEGEFERISSTDEEVLKSRARDRLAKVLDDTEEKEQSNPTIGRDSKKAV.

Serine 2 is subject to N-acetylserine. The residue at position 52 (serine 52) is a Phosphoserine. 4 helical membrane passes run 91–111 (VVTWTGKNIWSSVLMLCLFIT), 118–138 (TLVKYFGHLAIIAILWGYSLL), 184–204 (LLYTTVILSPIYVMITWLLLP), and 207–227 (SLMLMVGMFLLTYHSPWSKVA). Phosphoserine occurs at positions 420 and 424. The interval 429–523 (KVEENSTNGL…TIGRDSKKAV (95 aa)) is disordered. The segment covering 433–447 (NSTNGLTAEQELGSN) has biased composition (polar residues). 2 stretches are compositionally biased toward basic and acidic residues: residues 448–469 (KQEKDNAKKVGEPTTEETKEFA) and 478–503 (EFERISSTDEEVLKSRARDRLAKVLD).

This sequence belongs to the PEX28-32 family. PEX30/31 subfamily.

The protein resides in the peroxisome membrane. The chain is Peroxisomal membrane protein PEX30 (PEX30) from Saccharomyces cerevisiae (strain ATCC 204508 / S288c) (Baker's yeast).